The chain runs to 182 residues: ATP synthase subunit delta 2 (182 aa).

It belongs to the ATPase delta chain family. F-type ATPases have 2 components, F(1) - the catalytic core - and F(0) - the membrane proton channel. F(1) has five subunits: alpha(3), beta(3), gamma(1), delta(1), epsilon(1). F(0) has three main subunits: a(1), b(2) and c(10-14). The alpha and beta chains form an alternating ring which encloses part of the gamma chain. F(1) is attached to F(0) by a central stalk formed by the gamma and epsilon chains, while a peripheral stalk is formed by the delta and b chains.

The protein localises to the cell inner membrane. Its function is as follows. F(1)F(0) ATP synthase produces ATP from ADP in the presence of a proton or sodium gradient. F-type ATPases consist of two structural domains, F(1) containing the extramembraneous catalytic core and F(0) containing the membrane proton channel, linked together by a central stalk and a peripheral stalk. During catalysis, ATP synthesis in the catalytic domain of F(1) is coupled via a rotary mechanism of the central stalk subunits to proton translocation. In terms of biological role, this protein is part of the stalk that links CF(0) to CF(1). It either transmits conformational changes from CF(0) to CF(1) or is implicated in proton conduction. This is ATP synthase subunit delta 2 from Photobacterium profundum (strain SS9).